Consider the following 510-residue polypeptide: Aspartate kinase FUB3 (510 aa).

2 consecutive ACT domains span residues 372–440 (ILSN…VLPD) and 446–510 (LVGA…KNAM).

Belongs to the aspartokinase family.

It catalyses the reaction L-aspartate + ATP = 4-phospho-L-aspartate + ADP. The protein operates within mycotoxin biosynthesis. Functionally, aspartate kinase; part of the gene cluster that mediates the biosynthesis of fusaric acid, a mycotoxin with low to moderate toxicity to animals and humans, but with high phytotoxic properties. L-aspartate is suggested as fusaric acid amino acid precursor that is activated and further processed to O-acetyl-L-homoserine by cluster enzymes aspartate kinase FUB3 and homoserine O-acetyltransferase FUB5, as well as enzymes of the primary metabolism. The polyketide synthase (PKS) FUB1 generates the triketide trans-2-hexenal which is presumptively released by the hydrolase FUB4 and linked to the NRPS-bound amino acid precursor by NAD(P)-dependent dehydrogenase FUB6. FUB1, FUB4, and the non-canonical NRPS Fub8 may form an enzyme complex. Further processing of the NRPS-bound intermediate might be carried out by FUB6 and the sulfhydrylase FUB7, enabling a spontaneous electrocyclization to close the carbon backbone of fusaric acid. Dihydrofusaric acid is likely to be released via reduction by the thioester reductase (TR) domain of FUB8 whereupon the final oxidation to fusaric acid may (also) be performed by the FMN-dependent dehydrogenase FUB9. The protein is Aspartate kinase FUB3 of Gibberella moniliformis (strain M3125 / FGSC 7600) (Maize ear and stalk rot fungus).